We begin with the raw amino-acid sequence, 177 residues long: O-acetyl-ADP-ribose deacetylase (177 aa).

One can recognise a Macro domain in the interval 1 to 175 (MNSRIHVIHG…LYQRLLTQQG (175 aa)). Residues 11-12 (DI), asparagine 25, 33-35 (GVD), and 122-126 (STGVY) contribute to the substrate site. Aspartate 35 (proton acceptor) is an active-site residue.

It belongs to the MacroD-type family. YmdB subfamily. Homodimer. Interacts with RNase III.

It carries out the reaction 3''-O-acetyl-ADP-D-ribose + H2O = ADP-D-ribose + acetate + H(+). The enzyme catalyses 2''-O-acetyl-ADP-D-ribose + H2O = ADP-D-ribose + acetate + H(+). Functionally, deacetylates O-acetyl-ADP ribose to yield ADP-ribose and free acetate. Down-regulates ribonuclease 3 (RNase III) activity. Acts by interacting directly with the region of the ribonuclease that is required for dimerization/activation. This chain is O-acetyl-ADP-ribose deacetylase, found in Citrobacter rodentium (strain ICC168) (Citrobacter freundii biotype 4280).